Consider the following 208-residue polypeptide: Uridine kinase (208 aa).

Residue Gly-11–Thr-18 participates in ATP binding.

This sequence belongs to the uridine kinase family.

The protein resides in the cytoplasm. It catalyses the reaction uridine + ATP = UMP + ADP + H(+). The enzyme catalyses cytidine + ATP = CMP + ADP + H(+). It functions in the pathway pyrimidine metabolism; CTP biosynthesis via salvage pathway; CTP from cytidine: step 1/3. It participates in pyrimidine metabolism; UMP biosynthesis via salvage pathway; UMP from uridine: step 1/1. The chain is Uridine kinase from Staphylococcus carnosus (strain TM300).